Here is a 478-residue protein sequence, read N- to C-terminus: Bifunctional protein HldE (478 aa).

The segment at 1–318 (MKITLPDFTR…ENAIHARPES (318 aa)) is ribokinase. ATP is bound at residue 195 to 198 (NLSE). Residue Asp264 is part of the active site. The interval 344–478 (MTNGVFDILH…KTIISGSGKN (135 aa)) is cytidylyltransferase.

The protein in the N-terminal section; belongs to the carbohydrate kinase PfkB family. It in the C-terminal section; belongs to the cytidylyltransferase family. Homodimer.

The catalysed reaction is D-glycero-beta-D-manno-heptose 7-phosphate + ATP = D-glycero-beta-D-manno-heptose 1,7-bisphosphate + ADP + H(+). The enzyme catalyses D-glycero-beta-D-manno-heptose 1-phosphate + ATP + H(+) = ADP-D-glycero-beta-D-manno-heptose + diphosphate. Its pathway is nucleotide-sugar biosynthesis; ADP-L-glycero-beta-D-manno-heptose biosynthesis; ADP-L-glycero-beta-D-manno-heptose from D-glycero-beta-D-manno-heptose 7-phosphate: step 1/4. The protein operates within nucleotide-sugar biosynthesis; ADP-L-glycero-beta-D-manno-heptose biosynthesis; ADP-L-glycero-beta-D-manno-heptose from D-glycero-beta-D-manno-heptose 7-phosphate: step 3/4. In terms of biological role, catalyzes the phosphorylation of D-glycero-D-manno-heptose 7-phosphate at the C-1 position to selectively form D-glycero-beta-D-manno-heptose-1,7-bisphosphate. Its function is as follows. Catalyzes the ADP transfer from ATP to D-glycero-beta-D-manno-heptose 1-phosphate, yielding ADP-D-glycero-beta-D-manno-heptose. This is Bifunctional protein HldE from Erwinia tasmaniensis (strain DSM 17950 / CFBP 7177 / CIP 109463 / NCPPB 4357 / Et1/99).